The sequence spans 95 residues: Basic phospholipase A2 (95 aa).

2 N6-palmitoyl lysine lipidation sites follow: lysine 7 and lysine 10. Ca(2+)-binding residues include tyrosine 23, glycine 25, and glycine 27. 5 disulfides stabilise this stretch: cysteine 24–cysteine 40, cysteine 39–cysteine 77, cysteine 46–cysteine 70, cysteine 53–cysteine 63, and cysteine 57–cysteine 68. The active site involves histidine 43. Aspartate 44 is a Ca(2+) binding site. Residue aspartate 71 is part of the active site.

As to quaternary structure, monomer. Requires Ca(2+) as cofactor. In terms of tissue distribution, expressed by the venom gland.

It localises to the secreted. It catalyses the reaction a 1,2-diacyl-sn-glycero-3-phosphocholine + H2O = a 1-acyl-sn-glycero-3-phosphocholine + a fatty acid + H(+). Functionally, PLA2 catalyzes the calcium-dependent hydrolysis of the 2-acyl groups in 3-sn-phosphoglycerides. Induces local and systemic myotoxicity in an intramuscular mouse model. Induces local edema in a mouse footpad assay. Does not exhibit any anticoagulant effects. Does not mediate an antibacterial effect against Gram-negative and Gram-positive bacteria. This Agkistrodon piscivorus leucostoma (Western cottonmouth) protein is Basic phospholipase A2.